The chain runs to 105 residues: MNPSEMQRKAPPRRRRHRNRAPLTHKMNKMVTSEEQMKLPSTKKAEPPTWAQLKKLTQLATKYLENTKVTQTPESMLLAALMIVSMVSAGVLNSSEETATIENGP.

The disordered stretch occupies residues 1–48 (MNPSEMQRKAPPRRRRHRNRAPLTHKMNKMVTSEEQMKLPSTKKAEPP). The span at 10–20 (APPRRRRHRNR) shows a compositional bias: basic residues. The Nuclear localization signal signature appears at 13–20 (RRRRHRNR). A Nuclear export signal motif is present at residues 50-59 (WAQLKKLTQL).

As to quaternary structure, forms homodimers, homotrimers, and homotetramers via a C-terminal domain. Associates with XPO1 and with ZNF145.

Its subcellular location is the cytoplasm. It localises to the nucleus. The protein localises to the nucleolus. Functionally, retroviral replication requires the nuclear export and translation of unspliced, singly-spliced and multiply-spliced derivatives of the initial genomic transcript. Rec interacts with a highly structured RNA element (RcRE) present in the viral 3'LTR and recruits the cellular nuclear export machinery. This permits export to the cytoplasm of unspliced genomic or incompletely spliced subgenomic viral transcripts. The polypeptide is Endogenous retrovirus group K member 8 Rec protein (ERVK-8) (Homo sapiens (Human)).